Reading from the N-terminus, the 296-residue chain is UDP-N-acetylglucosamine transporter TMEM241 homolog (296 aa).

The next 10 helical transmembrane spans lie at Ala7 to Val29, Trp41 to Ile61, Ser67 to Ser87, Leu93 to Gln113, Ile126 to Phe146, Asp147 to Phe167, Val187 to Leu207, Phe217 to Lys237, Ala248 to Phe266, and Val272 to Ala291.

This sequence belongs to the nucleotide-sugar transporter family. SLC35A subfamily.

It localises to the golgi apparatus. It is found in the cis-Golgi network membrane. Its function is as follows. Golgi-localized UDP-N-acetylglucosamine (UDP-GlcNAc) transporter that transports UDP-N-acetylglucosamine into Golgi lumen. The polypeptide is UDP-N-acetylglucosamine transporter TMEM241 homolog (tmem241) (Xenopus laevis (African clawed frog)).